The following is a 1706-amino-acid chain: Probable ATP-dependent RNA helicase DDX60-like (1706 aa).

The interval R545–Q580 is disordered. The span at S551–H564 shows a compositional bias: polar residues. Residues Q565–S574 are compositionally biased toward basic residues. Residues L752–K919 enclose the Helicase ATP-binding domain. Residue A765–T772 participates in ATP binding. The DEAH box motif lies at D869–H872. The 150-residue stretch at D1205–L1354 folds into the Helicase C-terminal domain.

The protein belongs to the helicase family.

It carries out the reaction ATP + H2O = ADP + phosphate + H(+). The chain is Probable ATP-dependent RNA helicase DDX60-like from Homo sapiens (Human).